Here is a 212-residue protein sequence, read N- to C-terminus: Probable GTP-binding protein EngB (212 aa).

The EngB-type G domain maps to 25–199 (FGYEVAFAGR…WAKLDEWMEY (175 aa)). GTP is bound by residues 33 to 40 (GRSNAGKS), 60 to 64 (GRTQL), 78 to 81 (DLPG), 145 to 148 (TKSD), and 178 to 180 (FSS). Mg(2+)-binding residues include S40 and T62.

This sequence belongs to the TRAFAC class TrmE-Era-EngA-EngB-Septin-like GTPase superfamily. EngB GTPase family. Requires Mg(2+) as cofactor.

Necessary for normal cell division and for the maintenance of normal septation. This is Probable GTP-binding protein EngB from Hydrogenovibrio crunogenus (strain DSM 25203 / XCL-2) (Thiomicrospira crunogena).